The chain runs to 702 residues: Palmitoyltransferase AKR1 (702 aa).

Residues 1 to 40 (MSTDAELQTISGLSVASKSAPSTQTEGVTASGKVESTTNA) show a composition bias toward polar residues. A disordered region spans residues 1 to 51 (MSTDAELQTISGLSVASKSAPSTQTEGVTASGKVESTTNAEEATSDVEEEE). At 1–299 (MSTDAELQTI…TTNLLCFFTP (299 aa)) the chain is on the cytoplasmic side. ANK repeat units follow at residues 49 to 80 (EEEN…VLDT), 83 to 112 (DGVT…VVDA), 117 to 147 (LNGT…PLRS), 150 to 179 (QGYN…PVDC), 183 to 212 (NGRT…DVKI), and 216 to 245 (QGFL…DMYA). Transmembrane regions (helical) follow at residues 300–320 (FILI…FGII) and 321–341 (LTVA…LPSL). The Cytoplasmic portion of the chain corresponds to 342–354 (YNGHAALLKSPFQ). The chain crosses the membrane as a helical span at residues 355–375 (AGIFTGSAFWVTVKYLTSVLP). The Lumenal segment spans residues 376-379 (ATFA). Residues 380–400 (SHPILNFFFASIFGLAMYCFF) form a helical membrane-spanning segment. Over 401 to 479 (RCMSMDPGYI…WNAIGVRNHR (79 aa)) the chain is Cytoplasmic. Positions 436-486 (HFCFVTYVRKPLRSKFCRQSKRVVARFDHFCPWVWNAIGVRNHRMFVLYVL) constitute a DHHC domain. Cysteine 466 functions as the S-palmitoyl cysteine intermediate in the catalytic mechanism. A helical membrane pass occupies residues 480–500 (MFVLYVLFLQIGIPLWLALNS). Over 501–518 (AYFGELLEIKRWDPLEFY) the chain is Lumenal. The helical transmembrane segment at 519–539 (LVIWISLQLIWITFLSFVQIF) threads the bilayer. Topologically, residues 540–702 (QICRSLTTSE…GEALLAESQV (163 aa)) are cytoplasmic. The tract at residues 679–702 (PNQQQTNNRSTREDGEALLAESQV) is disordered.

This sequence belongs to the DHHC palmitoyltransferase family. AKR/ZDHHC17 subfamily.

Its subcellular location is the early endosome membrane. It is found in the golgi apparatus membrane. The catalysed reaction is L-cysteinyl-[protein] + hexadecanoyl-CoA = S-hexadecanoyl-L-cysteinyl-[protein] + CoA. Its function is as follows. Palmitoyltransferase specific for casein kinase 1. This is Palmitoyltransferase AKR1 (AKR1) from Yarrowia lipolytica (strain CLIB 122 / E 150) (Yeast).